Here is a 226-residue protein sequence, read N- to C-terminus: Cell division protein SepF (226 aa).

The tract at residues 20–116 (RAYDDAGYDK…ESLTYHTRDN (97 aa)) is disordered. Residues 22-44 (YDDAGYDKGGYRESRYRSSRYSE) show a composition bias toward basic and acidic residues. Positions 45–56 (DFGDEDDEDEEA) are enriched in acidic residues. A compositionally biased stretch (basic and acidic residues) spans 62–95 (RRGDRSRLERAAARSGDVDHNVEGEQPERVERAS). The segment covering 97 to 111 (RSITRSAEPSESLTY) has biased composition (polar residues).

This sequence belongs to the SepF family. Homodimer. Interacts with FtsZ.

The protein localises to the cytoplasm. Its function is as follows. Cell division protein that is part of the divisome complex and is recruited early to the Z-ring. Probably stimulates Z-ring formation, perhaps through the cross-linking of FtsZ protofilaments. Its function overlaps with FtsA. In Salinispora arenicola (strain CNS-205), this protein is Cell division protein SepF.